The chain runs to 392 residues: Putative cystathionine gamma-lyase (392 aa).

A compositionally biased stretch (polar residues) spans 1 to 10; sequence MSDSATTDSA. Residues 1 to 41 are disordered; it reads MSDSATTDSAGTGGERSASAPGDGTRAVRAGLPEPVKHEPT. At Lys216 the chain carries N6-(pyridoxal phosphate)lysine.

This sequence belongs to the trans-sulfuration enzymes family. Requires pyridoxal 5'-phosphate as cofactor.

Its subcellular location is the cytoplasm. It catalyses the reaction L,L-cystathionine + H2O = 2-oxobutanoate + L-cysteine + NH4(+). Its pathway is amino-acid biosynthesis; L-cysteine biosynthesis; L-cysteine from L-homocysteine and L-serine: step 2/2. The protein is Putative cystathionine gamma-lyase (cysA) of Streptomyces coelicolor (strain ATCC BAA-471 / A3(2) / M145).